We begin with the raw amino-acid sequence, 160 residues long: Lipoprotein signal peptidase (160 aa).

A run of 3 helical transmembrane segments spans residues 5-25, 60-80, and 84-104; these read LVFF…KFII, IEWL…AFFI, and LPFL…AGTV. Active-site residues include D118 and D132. Residues 128–148 form a helical membrane-spanning segment; the sequence is FNIADSCLTVGVIGLLLLYIV.

The protein belongs to the peptidase A8 family.

It is found in the cell membrane. The enzyme catalyses Release of signal peptides from bacterial membrane prolipoproteins. Hydrolyzes -Xaa-Yaa-Zaa-|-(S,diacylglyceryl)Cys-, in which Xaa is hydrophobic (preferably Leu), and Yaa (Ala or Ser) and Zaa (Gly or Ala) have small, neutral side chains.. It functions in the pathway protein modification; lipoprotein biosynthesis (signal peptide cleavage). Functionally, this protein specifically catalyzes the removal of signal peptides from prolipoproteins. In Dehalococcoides mccartyi (strain ATCC BAA-2100 / JCM 16839 / KCTC 5957 / BAV1), this protein is Lipoprotein signal peptidase.